The primary structure comprises 170 residues: Small ribosomal subunit protein uS13 (170 aa).

The span at 128-140 shows a compositional bias: basic residues; it reads VRHKRGQKVRGQR. Residues 128 to 170 form a disordered region; it reads VRHKRGQKVRGQRTKSTGRTEGTIGVNVEAIKEEQAEDGGDEE.

The protein belongs to the universal ribosomal protein uS13 family. In terms of assembly, part of the 30S ribosomal subunit. Forms a loose heterodimer with protein S19. Forms two bridges to the 50S subunit in the 70S ribosome.

Located at the top of the head of the 30S subunit, it contacts several helices of the 16S rRNA. In the 70S ribosome it contacts the 23S rRNA (bridge B1a) and protein L5 of the 50S subunit (bridge B1b), connecting the 2 subunits; these bridges are implicated in subunit movement. The polypeptide is Small ribosomal subunit protein uS13 (Natronomonas pharaonis (strain ATCC 35678 / DSM 2160 / CIP 103997 / JCM 8858 / NBRC 14720 / NCIMB 2260 / Gabara) (Halobacterium pharaonis)).